A 970-amino-acid polypeptide reads, in one-letter code: Isoleucine--tRNA ligase (970 aa).

A 'HIGH' region motif is present at residues 65-75 (PYANGHLHIGH). Glu608 is an L-isoleucyl-5'-AMP binding site. The 'KMSKS' region motif lies at 649–653 (KMSKS). Residue Lys652 participates in ATP binding. Zn(2+) is bound by residues Cys943, Cys946, Cys962, and Cys965.

Belongs to the class-I aminoacyl-tRNA synthetase family. IleS type 1 subfamily. Monomer. It depends on Zn(2+) as a cofactor.

Its subcellular location is the cytoplasm. The enzyme catalyses tRNA(Ile) + L-isoleucine + ATP = L-isoleucyl-tRNA(Ile) + AMP + diphosphate. Functionally, catalyzes the attachment of isoleucine to tRNA(Ile). As IleRS can inadvertently accommodate and process structurally similar amino acids such as valine, to avoid such errors it has two additional distinct tRNA(Ile)-dependent editing activities. One activity is designated as 'pretransfer' editing and involves the hydrolysis of activated Val-AMP. The other activity is designated 'posttransfer' editing and involves deacylation of mischarged Val-tRNA(Ile). In Ruegeria pomeroyi (strain ATCC 700808 / DSM 15171 / DSS-3) (Silicibacter pomeroyi), this protein is Isoleucine--tRNA ligase.